The primary structure comprises 84 residues: UPF0473 protein CKL_1327 (84 aa).

This sequence belongs to the UPF0473 family.

The polypeptide is UPF0473 protein CKL_1327 (Clostridium kluyveri (strain ATCC 8527 / DSM 555 / NBRC 12016 / NCIMB 10680 / K1)).